Reading from the N-terminus, the 385-residue chain is DNA replication and repair protein RecF (385 aa).

Residue Gly-30–Thr-37 participates in ATP binding.

This sequence belongs to the RecF family.

The protein localises to the cytoplasm. Its function is as follows. The RecF protein is involved in DNA metabolism; it is required for DNA replication and normal SOS inducibility. RecF binds preferentially to single-stranded, linear DNA. It also seems to bind ATP. The sequence is that of DNA replication and repair protein RecF from Mycobacterium avium (strain 104).